The sequence spans 524 residues: Putative ribose/galactose/methyl galactoside import ATP-binding protein 1 (524 aa).

ABC transporter domains lie at 29–270 (LEMR…VGRT) and 280–524 (VPIG…TGGH). 61–68 (GENGAGKS) lines the ATP pocket.

It belongs to the ABC transporter superfamily. Carbohydrate importer 2 (CUT2) (TC 3.A.1.2) family.

It is found in the cell inner membrane. It catalyses the reaction D-ribose(out) + ATP + H2O = D-ribose(in) + ADP + phosphate + H(+). The catalysed reaction is D-galactose(out) + ATP + H2O = D-galactose(in) + ADP + phosphate + H(+). In terms of biological role, part of an ABC transporter complex involved in carbohydrate import. Could be involved in ribose, galactose and/or methyl galactoside import. Responsible for energy coupling to the transport system. This is Putative ribose/galactose/methyl galactoside import ATP-binding protein 1 from Rhizobium etli (strain ATCC 51251 / DSM 11541 / JCM 21823 / NBRC 15573 / CFN 42).